The primary structure comprises 195 residues: Penicillin-binding protein activator LpoB (195 aa).

Positions 1–16 (MKKYLFVALAALVLTG) are cleaved as a signal peptide. C17 is lipidated: N-palmitoyl cysteine. The S-diacylglycerol cysteine moiety is linked to residue C17. A disordered region spans residues 19-55 (SRPPEPEQPQPPVTVEPVTPPVVEEPQPPVTEPVPQP). 2 stretches are compositionally biased toward pro residues: residues 24–38 (PEQP…PVTP) and 44–55 (PQPPVTEPVPQP).

It belongs to the LpoB family. In terms of assembly, interacts with PBP1b.

It localises to the cell outer membrane. Its function is as follows. Regulator of peptidoglycan synthesis that is essential for the function of penicillin-binding protein 1B (PBP1b). In Serratia proteamaculans (strain 568), this protein is Penicillin-binding protein activator LpoB.